The primary structure comprises 489 residues: 3-octaprenyl-4-hydroxybenzoate carboxy-lyase (489 aa).

Asn172 serves as a coordination point for Mn(2+). Residues 175–177, 189–191, and 194–195 contribute to the prenylated FMN site; these read IYR, RWL, and RG. Glu238 is a binding site for Mn(2+). Catalysis depends on Asp287, which acts as the Proton donor.

Belongs to the UbiD family. Homohexamer. Prenylated FMN is required as a cofactor. The cofactor is Mn(2+).

It localises to the cell membrane. The catalysed reaction is a 4-hydroxy-3-(all-trans-polyprenyl)benzoate + H(+) = a 2-(all-trans-polyprenyl)phenol + CO2. Its pathway is cofactor biosynthesis; ubiquinone biosynthesis. Catalyzes the decarboxylation of 3-octaprenyl-4-hydroxy benzoate to 2-octaprenylphenol, an intermediate step in ubiquinone biosynthesis. This chain is 3-octaprenyl-4-hydroxybenzoate carboxy-lyase, found in Salmonella paratyphi B (strain ATCC BAA-1250 / SPB7).